We begin with the raw amino-acid sequence, 240 residues long: Endonuclease NucS 1 (240 aa).

This sequence belongs to the NucS endonuclease family.

It localises to the cytoplasm. Cleaves both 3' and 5' ssDNA extremities of branched DNA structures. The sequence is that of Endonuclease NucS 1 from Halobacterium salinarum (strain ATCC 700922 / JCM 11081 / NRC-1) (Halobacterium halobium).